A 160-amino-acid polypeptide reads, in one-letter code: Small ribosomal subunit protein uS7 (160 aa).

It belongs to the universal ribosomal protein uS7 family. In terms of assembly, part of the 30S ribosomal subunit. Contacts proteins S9 and S11.

Its function is as follows. One of the primary rRNA binding proteins, it binds directly to 16S rRNA where it nucleates assembly of the head domain of the 30S subunit. Is located at the subunit interface close to the decoding center, probably blocks exit of the E-site tRNA. This chain is Small ribosomal subunit protein uS7, found in Ehrlichia ruminantium (strain Gardel).